A 327-amino-acid polypeptide reads, in one-letter code: GTPase Obg (327 aa).

Residues M1–L159 form the Obg domain. The 168-residue stretch at A160–I327 folds into the OBG-type G domain. ATP-binding positions include G166–S173, F191–I195, D213–G216, N280–E283, and S309–S311. Residues S173 and T193 each contribute to the Mg(2+) site.

The protein belongs to the TRAFAC class OBG-HflX-like GTPase superfamily. OBG GTPase family. As to quaternary structure, monomer. Mg(2+) is required as a cofactor.

It localises to the cytoplasm. An essential GTPase which binds GTP, GDP and possibly (p)ppGpp with moderate affinity, with high nucleotide exchange rates and a fairly low GTP hydrolysis rate. Plays a role in control of the cell cycle, stress response, ribosome biogenesis and in those bacteria that undergo differentiation, in morphogenesis control. The protein is GTPase Obg of Prochlorococcus marinus (strain MIT 9215).